A 403-amino-acid chain; its full sequence is Flavohemoprotein (403 aa).

Positions 1–138 constitute a Globin domain; sequence MLTQKTKDIV…LADVLMGMES (138 aa). His-85 contacts heme b. Active-site charge relay system residues include Tyr-95 and Glu-137. Residues 149–403 are reductase; sequence GGWKGWRTFV…EVFGPDLFAE (255 aa). One can recognise an FAD-binding FR-type domain in the interval 152–262; it reads KGWRTFVIRE…AAPYGSFHID (111 aa). FAD-binding positions include Tyr-190 and 206 to 209; that span reads RQYS. 275–280 is an NADP(+) binding site; sequence GVGLTP. Residue 395–398 participates in FAD binding; that stretch reads VFGP.

Belongs to the globin family. Two-domain flavohemoproteins subfamily. The protein in the C-terminal section; belongs to the flavoprotein pyridine nucleotide cytochrome reductase family. As to quaternary structure, monomer. FAD is required as a cofactor. Requires heme b as cofactor.

It is found in the cytoplasm. It carries out the reaction 2 nitric oxide + NADPH + 2 O2 = 2 nitrate + NADP(+) + H(+). The catalysed reaction is 2 nitric oxide + NADH + 2 O2 = 2 nitrate + NAD(+) + H(+). In terms of biological role, is involved in NO detoxification in an aerobic process, termed nitric oxide dioxygenase (NOD) reaction that utilizes O(2) and NAD(P)H to convert NO to nitrate, which protects the bacterium from various noxious nitrogen compounds. Therefore, plays a central role in the inducible response to nitrosative stress. Its function is as follows. In the presence of oxygen and NADH, FHP has NADH oxidase activity, which leads to the generation of superoxide and H(2)O(2), both in vitro and in vivo, and it has been suggested that FHP might act as an amplifier of superoxide stress. Under anaerobic conditions, FHP also exhibits nitric oxide reductase and FAD reductase activities. However, all these reactions are much lower than NOD activity. The polypeptide is Flavohemoprotein (hmp) (Cupriavidus necator (strain ATCC 17699 / DSM 428 / KCTC 22496 / NCIMB 10442 / H16 / Stanier 337) (Ralstonia eutropha)).